We begin with the raw amino-acid sequence, 288 residues long: Chemotaxis protein methyltransferase 2 (288 aa).

In terms of domain architecture, CheR-type methyltransferase spans 1 to 280 (MNEIVITDTD…TGYYKPHKGK (280 aa)). S-adenosyl-L-methionine contacts are provided by residues asparagine 76, threonine 78, arginine 82, glutamate 119, aspartate 145, 200–201 (NL), and 219–220 (RN).

It carries out the reaction L-glutamyl-[protein] + S-adenosyl-L-methionine = [protein]-L-glutamate 5-O-methyl ester + S-adenosyl-L-homocysteine. Methylation of the membrane-bound methyl-accepting chemotaxis proteins (MCP) to form gamma-glutamyl methyl ester residues in MCP. The polypeptide is Chemotaxis protein methyltransferase 2 (cheR2) (Vibrio cholerae serotype O1 (strain ATCC 39315 / El Tor Inaba N16961)).